We begin with the raw amino-acid sequence, 356 residues long: S-adenosylmethionine:tRNA ribosyltransferase-isomerase (356 aa).

This sequence belongs to the QueA family. As to quaternary structure, monomer.

The protein resides in the cytoplasm. The catalysed reaction is 7-aminomethyl-7-carbaguanosine(34) in tRNA + S-adenosyl-L-methionine = epoxyqueuosine(34) in tRNA + adenine + L-methionine + 2 H(+). Its pathway is tRNA modification; tRNA-queuosine biosynthesis. Its function is as follows. Transfers and isomerizes the ribose moiety from AdoMet to the 7-aminomethyl group of 7-deazaguanine (preQ1-tRNA) to give epoxyqueuosine (oQ-tRNA). The chain is S-adenosylmethionine:tRNA ribosyltransferase-isomerase from Escherichia coli O6:H1 (strain CFT073 / ATCC 700928 / UPEC).